The chain runs to 276 residues: 1-(5-phosphoribosyl)-5-[(5-phosphoribosylamino)methylideneamino] imidazole-4-carboxamide isomerase (276 aa).

It belongs to the HisA/HisF family.

It is found in the cytoplasm. It catalyses the reaction 1-(5-phospho-beta-D-ribosyl)-5-[(5-phospho-beta-D-ribosylamino)methylideneamino]imidazole-4-carboxamide = 5-[(5-phospho-1-deoxy-D-ribulos-1-ylimino)methylamino]-1-(5-phospho-beta-D-ribosyl)imidazole-4-carboxamide. It participates in amino-acid biosynthesis; L-histidine biosynthesis; L-histidine from 5-phospho-alpha-D-ribose 1-diphosphate: step 4/9. In Debaryomyces hansenii (strain ATCC 36239 / CBS 767 / BCRC 21394 / JCM 1990 / NBRC 0083 / IGC 2968) (Yeast), this protein is 1-(5-phosphoribosyl)-5-[(5-phosphoribosylamino)methylideneamino] imidazole-4-carboxamide isomerase (HIS6).